Here is a 271-residue protein sequence, read N- to C-terminus: Calretinin (271 aa).

EF-hand domains lie at Leu16 to Ala51, Asn63 to Phe98, Gly107 to Lys142, Lys151 to Phe186, Leu195 to Lys230, and Met235 to Pro270. Residues Asp29, Asp31, Asn33, Tyr35, Glu40, Asp76, Asn78, Asp80, Lys82, Glu87, Asp120, Asp122, Ser124, Tyr126, Glu131, Asp164, Asn166, Asp168, Lys170, Glu175, Asp208, Asp210, Ser212, Tyr214, and Glu219 each contribute to the Ca(2+) site. Tyr214 is subject to Phosphotyrosine.

The protein belongs to the calbindin family.

It localises to the synapse. Its subcellular location is the cell projection. It is found in the dendrite. Functionally, calcium-binding protein involved in calcium homeostasis and signal transduction. It plays a critical role in buffering intracellular calcium levels and modulating calcium-dependent signaling pathways. Predominantly expressed in specific neuronal populations, influences synaptic plasticity and neuronal excitability, contributing to learning and memory. During embryonic development, it facilitates neuronal differentiation and maturation. The sequence is that of Calretinin (Calb2) from Rattus norvegicus (Rat).